Consider the following 244-residue polypeptide: 7-cyano-7-deazaguanine synthase (244 aa).

Residue 14–24 (FSGGQDSATCV) coordinates ATP. Zn(2+) is bound by residues Cys-202, Cys-217, Cys-220, and Cys-223.

It belongs to the QueC family. Zn(2+) is required as a cofactor.

It carries out the reaction 7-carboxy-7-deazaguanine + NH4(+) + ATP = 7-cyano-7-deazaguanine + ADP + phosphate + H2O + H(+). It participates in purine metabolism; 7-cyano-7-deazaguanine biosynthesis. Functionally, catalyzes the ATP-dependent conversion of 7-carboxy-7-deazaguanine (CDG) to 7-cyano-7-deazaguanine (preQ(0)). The sequence is that of 7-cyano-7-deazaguanine synthase from Burkholderia ambifaria (strain MC40-6).